Consider the following 208-residue polypeptide: Large ribosomal subunit protein uL4 (208 aa).

Belongs to the universal ribosomal protein uL4 family. Part of the 50S ribosomal subunit.

Functionally, one of the primary rRNA binding proteins, this protein initially binds near the 5'-end of the 23S rRNA. It is important during the early stages of 50S assembly. It makes multiple contacts with different domains of the 23S rRNA in the assembled 50S subunit and ribosome. Forms part of the polypeptide exit tunnel. In Solibacter usitatus (strain Ellin6076), this protein is Large ribosomal subunit protein uL4.